A 468-amino-acid chain; its full sequence is Anthocyanidin 3-O-glucoside 2'''-O-xylosyltransferase (468 aa).

UDP-alpha-D-xylose is bound by residues Ser284, 344 to 346 (IQQ), 361 to 369 (HCGFGSMWE), and 383 to 386 (HGEQ).

Belongs to the UDP-glycosyltransferase family.

The enzyme catalyses an anthocyanidin 3-O-beta-D-glucoside + UDP-alpha-D-xylose = an anthocyanidin 3-O-beta-D-sambubioside + UDP + 2 H(+). Its pathway is secondary metabolite biosynthesis; flavonoid biosynthesis. Functionally, contributes to the last few anthocyanin biosynthetic steps. Converts cyanidin 3-O-glucoside to cyanidin 3-O-xylosyl(1-&gt;2)glucoside. Can use 3-O-glucosylated anthocyanidins/flavonols and uridine diphosphate (UDP)-xylose as substrates. The polypeptide is Anthocyanidin 3-O-glucoside 2'''-O-xylosyltransferase (A3G2XYLT) (Arabidopsis thaliana (Mouse-ear cress)).